A 1192-amino-acid polypeptide reads, in one-letter code: Plakophilin-4 (1192 aa).

Residues 1–31 form a disordered region; it reads MPAPEQASLVEEGQPQTRQEAASTGPGMEPE. Residues 36–70 are a coiled coil; sequence TILASVKEQELQFQRLTRELEVERQIVASQLERCR. A disordered region spans residues 73–262; the sequence is AESPSIASTS…PRPLNPSAYS (190 aa). Serine 75 is subject to Phosphoserine. Over residues 77–86 the composition is skewed to polar residues; that stretch reads SIASTSSTEK. Threonine 84 is subject to Phosphothreonine. Residues serine 106, serine 132, serine 136, and serine 139 each carry the phosphoserine modification. Composition is skewed to polar residues over residues 138 to 156, 163 to 204, and 214 to 230; these read GSLG…SDSG, FHNS…QPSV, and SVPS…STGV. A phosphoserine mark is found at serine 221, serine 231, and serine 236. Positions 231-242 are enriched in low complexity; it reads SPSRGSLRTSLG. An omega-N-methylarginine mark is found at arginine 254 and arginine 270. Residues serine 273 and serine 281 each carry the phosphoserine modification. Residues 290 to 310 form a disordered region; the sequence is SVTSRQTSNPNGPTPQYQTTA. Phosphoserine is present on residues serine 314, serine 327, and serine 337. Positions 323–348 are disordered; it reads TRVASPSQGQVGSSSPKRSGMTAVPQ. Positions 325–338 are enriched in low complexity; sequence VASPSQGQVGSSSP. Position 372 is a phosphotyrosine (tyrosine 372). A phosphoserine mark is found at serine 392, serine 403, and serine 406. Threonine 412 carries the post-translational modification Phosphothreonine. Tyrosine 415 bears the Phosphotyrosine mark. Residues 415-455 form an ARM 1 repeat; the sequence is YEGRTYYSPVYRSPNHGTVELQGSQTALYRTGSVGIGNLQR. Phosphoserine occurs at positions 422, 427, and 438. The residue at position 478 (tyrosine 478) is a Phosphotyrosine. Phosphoserine is present on residues serine 510, serine 512, and serine 515. ARM repeat units lie at residues 518 to 557, 560 to 599, 604 to 644, 660 to 702, and 706 to 751; these read KDPR…HLCF, NKVK…NLVF, DENK…NLSS, LTNT…NLSS, and EARK…NLSY. Residues 773-782 are compositionally biased toward basic and acidic residues; that stretch reads GKESPSKDSE. The tract at residues 773–810 is disordered; that stretch reads GKESPSKDSEPSCWGKKKKKKKRTPQEDQWDGVGPIPG. Serine 776 is subject to Phosphoserine. 3 ARM repeats span residues 815–855, 862–901, and 950–993; these read PKGV…NLSA, AYIR…NMAL, and MENA…TLWQ. Phosphothreonine is present on residues threonine 1013 and threonine 1017. A Phosphoserine modification is found at serine 1045. A disordered region spans residues 1058–1086; that stretch reads PRSEYDRTQPPMQYYNSQGDATHKGLYPG. The segment covering 1067-1077 has biased composition (polar residues); sequence PPMQYYNSQGD. Phosphoserine occurs at positions 1091, 1100, and 1135.

It belongs to the beta-catenin family. In terms of assembly, interacts with PDZD2. Interacts (via the C-terminus) with FRMPD2 (via the PDZ 2 domain). Interacts with RHOA; the interaction is detected at the midbody. Interacts with ECT2; the interaction is detected at the midbody. Interacts with CCDC85B. In terms of tissue distribution, expressed in salivary glands (at protein level). Expressed in arrector pili muscle (at protein level).

It is found in the cell junction. It localises to the desmosome. The protein localises to the cytoplasm. Its subcellular location is the cytoskeleton. The protein resides in the spindle. It is found in the midbody. It localises to the cell membrane. Its function is as follows. Plays a role as a regulator of Rho activity during cytokinesis. May play a role in junctional plaques. In Homo sapiens (Human), this protein is Plakophilin-4 (PKP4).